The sequence spans 388 residues: FBD-associated F-box protein At5g60610 (388 aa).

The F-box domain maps to 1-47 (MDRISGLPDELLVKIISFVPTKVAVSTSILSKRWESLWKWVPKLECD). Positions 337 to 388 (NWKNIQRSVPKCLKSSLKTLEFAGYTARPEERDFLSFIFKKARCLKTSSISH) constitute an FBD domain.

This is FBD-associated F-box protein At5g60610 from Arabidopsis thaliana (Mouse-ear cress).